A 364-amino-acid polypeptide reads, in one-letter code: Aminomethyltransferase (364 aa).

The protein belongs to the GcvT family. The glycine cleavage system is composed of four proteins: P, T, L and H.

It carries out the reaction N(6)-[(R)-S(8)-aminomethyldihydrolipoyl]-L-lysyl-[protein] + (6S)-5,6,7,8-tetrahydrofolate = N(6)-[(R)-dihydrolipoyl]-L-lysyl-[protein] + (6R)-5,10-methylene-5,6,7,8-tetrahydrofolate + NH4(+). Its function is as follows. The glycine cleavage system catalyzes the degradation of glycine. In Shigella flexneri, this protein is Aminomethyltransferase.